Here is a 303-residue protein sequence, read N- to C-terminus: Bifunctional protein FolD (303 aa).

NADP(+) contacts are provided by residues 175–177 and Ile-243; that span reads GVS.

Belongs to the tetrahydrofolate dehydrogenase/cyclohydrolase family. Homodimer.

The catalysed reaction is (6R)-5,10-methylene-5,6,7,8-tetrahydrofolate + NADP(+) = (6R)-5,10-methenyltetrahydrofolate + NADPH. It catalyses the reaction (6R)-5,10-methenyltetrahydrofolate + H2O = (6R)-10-formyltetrahydrofolate + H(+). The protein operates within one-carbon metabolism; tetrahydrofolate interconversion. Functionally, catalyzes the oxidation of 5,10-methylenetetrahydrofolate to 5,10-methenyltetrahydrofolate and then the hydrolysis of 5,10-methenyltetrahydrofolate to 10-formyltetrahydrofolate. The polypeptide is Bifunctional protein FolD (Xanthomonas axonopodis pv. citri (strain 306)).